The sequence spans 203 residues: Holliday junction branch migration complex subunit RuvA (203 aa).

The segment at Met-1–Asn-64 is domain I. The tract at residues Asn-65–Pro-142 is domain II. The tract at residues Ala-143–Pro-154 is flexible linker. Residues Thr-155–Leu-203 are domain III.

The protein belongs to the RuvA family. In terms of assembly, homotetramer. Forms an RuvA(8)-RuvB(12)-Holliday junction (HJ) complex. HJ DNA is sandwiched between 2 RuvA tetramers; dsDNA enters through RuvA and exits via RuvB. An RuvB hexamer assembles on each DNA strand where it exits the tetramer. Each RuvB hexamer is contacted by two RuvA subunits (via domain III) on 2 adjacent RuvB subunits; this complex drives branch migration. In the full resolvosome a probable DNA-RuvA(4)-RuvB(12)-RuvC(2) complex forms which resolves the HJ.

Its subcellular location is the cytoplasm. In terms of biological role, the RuvA-RuvB-RuvC complex processes Holliday junction (HJ) DNA during genetic recombination and DNA repair, while the RuvA-RuvB complex plays an important role in the rescue of blocked DNA replication forks via replication fork reversal (RFR). RuvA specifically binds to HJ cruciform DNA, conferring on it an open structure. The RuvB hexamer acts as an ATP-dependent pump, pulling dsDNA into and through the RuvAB complex. HJ branch migration allows RuvC to scan DNA until it finds its consensus sequence, where it cleaves and resolves the cruciform DNA. This chain is Holliday junction branch migration complex subunit RuvA, found in Salmonella choleraesuis (strain SC-B67).